Consider the following 159-residue polypeptide: NAD(P)H-quinone oxidoreductase subunit J, chloroplastic (159 aa).

This sequence belongs to the complex I 30 kDa subunit family. NDH is composed of at least 16 different subunits, 5 of which are encoded in the nucleus.

The protein localises to the plastid. The protein resides in the chloroplast thylakoid membrane. It carries out the reaction a plastoquinone + NADH + (n+1) H(+)(in) = a plastoquinol + NAD(+) + n H(+)(out). It catalyses the reaction a plastoquinone + NADPH + (n+1) H(+)(in) = a plastoquinol + NADP(+) + n H(+)(out). Functionally, NDH shuttles electrons from NAD(P)H:plastoquinone, via FMN and iron-sulfur (Fe-S) centers, to quinones in the photosynthetic chain and possibly in a chloroplast respiratory chain. The immediate electron acceptor for the enzyme in this species is believed to be plastoquinone. Couples the redox reaction to proton translocation, and thus conserves the redox energy in a proton gradient. This Brachypodium distachyon (Purple false brome) protein is NAD(P)H-quinone oxidoreductase subunit J, chloroplastic.